Here is a 1436-residue protein sequence, read N- to C-terminus: Inositol hexakisphosphate and diphosphoinositol-pentakisphosphate kinase 1 (1436 aa).

Residue 64-65 (KK) coordinates substrate. ATP contacts are provided by residues Arg-145, Lys-198, His-205, Arg-224, 248-251 (EEFM), and 257-259 (DVK). 224–225 (RK) contributes to the substrate binding site. Lys-259 and Arg-273 together coordinate substrate. ATP is bound by residues Ser-275, Asp-320, and 332 to 334 (DVN). 337 to 340 (SFVK) lines the substrate pocket. The tract at residues 382 to 453 (PTTSGTMMEL…VLDITRLLLA (72 aa)) is polyphosphoinositide-binding domain. Positions 915–998 (GSAPAGCGFR…TSSSRPGGYR (84 aa)) are disordered. Phosphoserine is present on residues Ser-939, Ser-982, Ser-1032, Ser-1068, Ser-1140, and Ser-1147. Disordered regions lie at residues 1131–1191 (NHQA…GFSD) and 1389–1436 (SELS…EAIS). Positions 1163–1181 (SSGPSSTVSSAGPSSPTTV) are enriched in low complexity. Residues 1405–1436 (LSEETELQAQEVSEEIDQESEVVDELPPEAIS) show a composition bias toward acidic residues.

This sequence belongs to the histidine acid phosphatase family. VIP1 subfamily.

It localises to the cytoplasm. It is found in the cytosol. The protein localises to the cell membrane. It carries out the reaction 1D-myo-inositol hexakisphosphate + ATP = 1-diphospho-1D-myo-inositol 2,3,4,5,6-pentakisphosphate + ADP. The enzyme catalyses 5-diphospho-1D-myo-inositol 1,2,3,4,6-pentakisphosphate + ATP + H(+) = 1,5-bis(diphospho)-1D-myo-inositol 2,3,4,6-tetrakisphosphate + ADP. Bifunctional inositol kinase that acts in concert with the IP6K kinases IP6K1, IP6K2 and IP6K3 to synthesize the diphosphate group-containing inositol pyrophosphates diphosphoinositol pentakisphosphate, PP-InsP5, and bis-diphosphoinositol tetrakisphosphate, (PP)2-InsP4. PP-InsP5 and (PP)2-InsP4, also respectively called InsP7 and InsP8, regulate a variety of cellular processes, including apoptosis, vesicle trafficking, cytoskeletal dynamics, exocytosis, insulin signaling and neutrophil activation. Phosphorylates inositol hexakisphosphate (InsP6) at position 1 to produce PP-InsP5 which is in turn phosphorylated by IP6Ks to produce (PP)2-InsP4. Alternatively, phosphorylates PP-InsP5 at position 1, produced by IP6Ks from InsP6, to produce (PP)2-InsP4. Activated when cells are exposed to hyperosmotic stress. This chain is Inositol hexakisphosphate and diphosphoinositol-pentakisphosphate kinase 1, found in Mus musculus (Mouse).